The sequence spans 500 residues: NAD(P)H-quinone oxidoreductase chain 4, chloroplastic (500 aa).

The next 14 helical transmembrane spans lie at 4-24 (FPWL…IFFL), 35-55 (YTIC…CYHF), 87-107 (IGPV…AWPV), 113-130 (LFHF…GSFS), 134-154 (LLLF…LLSM), 167-187 (FILY…GVGL), 207-227 (VALE…KLPI), 242-262 (HYST…YGLI), 272-292 (AHSI…IYAA), 305-325 (IAYS…SITD), 330-350 (GAIL…FLAG), 386-406 (LALP…GIIT), 416-436 (IVIT…LLSM), and 462-482 (LFVS…PDFV).

The protein belongs to the complex I subunit 4 family.

The protein resides in the plastid. It is found in the chloroplast thylakoid membrane. It catalyses the reaction a plastoquinone + NADH + (n+1) H(+)(in) = a plastoquinol + NAD(+) + n H(+)(out). It carries out the reaction a plastoquinone + NADPH + (n+1) H(+)(in) = a plastoquinol + NADP(+) + n H(+)(out). This is NAD(P)H-quinone oxidoreductase chain 4, chloroplastic from Guizotia abyssinica (Niger).